Consider the following 193-residue polypeptide: Inner membrane protein p54 (193 aa).

Residues Tyr-32–Phe-52 form a helical membrane-spanning segment. The disordered stretch occupies residues Pro-84–Arg-126. Tandem repeats lie at residues Ala-135–Ser-138, Ala-139–Ser-142, Ala-143–Ser-146, and Ala-147–Ser-150. Residues Ala-135–Ser-150 form a 4 X 4 AA tandem repeats of A-A-A-S region. The interval Tyr-159–Thr-171 is interaction with host DYNLL1.

Belongs to the asfivirus envelope protein p54 family. In terms of assembly, interacts with the host light chain cytoplasmic dynein DYNLL1; this interaction is critical for intracellular microtubule-dependent virus transport toward viral factories.

The protein localises to the virion membrane. It localises to the host cytoplasm. The protein resides in the host cytoskeleton. It is found in the host endoplasmic reticulum membrane. In terms of biological role, inner envelope protein involved, through its interaction with host dynein, in the intracellular microtubule-dependent transport of viral capsid toward viral factories. Seems to induce caspase-3 activation and apoptosis. Plays a role in virion morphogenesis by recruiting and transforming the host ER membranes into the precursors of the viral envelope. Involved in virus attachment to the host cell. The polypeptide is Inner membrane protein p54 (Ornithodoros (relapsing fever ticks)).